The chain runs to 720 residues: NAD(+) hydrolase ApTIR (720 aa).

The 131-residue stretch at 1 to 131 (MRYDAFISYS…AVPPALRGVF (131 aa)) folds into the TIR domain. Residues 10–11 (SH) and Ala48 each bind NAD(+). Glu84 is a catalytic residue. Residues 192 to 211 (GALAVVCALLLLVAGTAVAW) traverse the membrane as a helical segment. Disordered stretches follow at residues 231–275 (ATAA…AVAE) and 292–359 (EGIA…EEAV). Basic and acidic residues-rich tracts occupy residues 256 to 268 (EQQR…EEAR) and 307 to 359 (AEAR…EEAV). Positions 313–362 (RGVADAEKAKANRAAAEAERQRKIAADEQRKAHEAAAEAERQREEAVKQQ) form a coiled coil. WD repeat units follow at residues 420–459 (GHTA…APRR), 465–504 (SSTA…APRR), 510–549 (GHTD…APRR), 555–594 (DHTA…APRR), 600–639 (GHTA…APRR), 645–684 (GHTA…APRR), and 690–720 (GHTD…CCGM).

The protein localises to the cell membrane. It carries out the reaction NAD(+) + H2O = ADP-D-ribose + nicotinamide + H(+). Functionally, NAD(+) hydrolase (NADase) that catalyzes cleavage of NAD(+) into ADP-D-ribose (ADPR) and nicotinamide. The sequence is that of NAD(+) hydrolase ApTIR from Actinoplanes sp. (strain ATCC 31044 / CBS 674.73 / SE50/110).